Here is a 275-residue protein sequence, read N- to C-terminus: Two-component response regulator PprB (275 aa).

The Response regulatory domain maps to 10-128 (SVLIIDDEPQ…ELLHGLERLE (119 aa)). Asp-60 is subject to 4-aspartylphosphate. A disordered region spans residues 173–205 (SQPSALRSEDSQPSAPPAPVAESQVSPSNPLFG). The 66-residue stretch at 200-265 (SNPLFGKLSP…QLALALSPAA (66 aa)) folds into the HTH luxR-type domain. Positions 224 to 243 (NYQIAYELGITENTVKLYVS) form a DNA-binding region, H-T-H motif.

Post-translationally, phosphorylated by PprA.

In terms of biological role, member of the two-component regulatory system PprA/PprB involved in biofilm formation by controlling the expression of many related genes including type IVb pili major subunit flp pilin, adhesin bapA or cupE fimbriae. Functions as a transcription regulator by direct binding to promoter regions. Negatively regulates its own transcription. The polypeptide is Two-component response regulator PprB (Pseudomonas aeruginosa (strain ATCC 15692 / DSM 22644 / CIP 104116 / JCM 14847 / LMG 12228 / 1C / PRS 101 / PAO1)).